A 230-amino-acid polypeptide reads, in one-letter code: Sugar fermentation stimulation protein homolog (230 aa).

The protein belongs to the SfsA family.

The polypeptide is Sugar fermentation stimulation protein homolog (Clostridium perfringens (strain ATCC 13124 / DSM 756 / JCM 1290 / NCIMB 6125 / NCTC 8237 / Type A)).